A 579-amino-acid chain; its full sequence is Extracellular serine/threonine protein kinase FAM20C (579 aa).

Residues 1-10 are Cytoplasmic-facing; sequence MKMILVRRFR. Positions 1–87 are excised as a propeptide; it reads MKMILVRRFR…PNKHTLRILQ (87 aa). The helical; Signal-anchor for type II membrane protein transmembrane segment at 11–31 threads the bilayer; sequence VLILVVFLLACALHIAVDLLP. At 32-579 the chain is on the lumenal side; that stretch reads KLDRRATRSS…ATEHRASTER (548 aa). The disordered stretch occupies residues 38 to 79; the sequence is TRSSGEPGCSCAQPAAEAAGPGWAQARSRPGESAGGDAGWPN. Residues 49-63 are compositionally biased toward low complexity; that stretch reads AQPAAEAAGPGWAQA. Residue asparagine 96 is glycosylated (N-linked (GlcNAc...) asparagine). The tract at residues 104-155 is disordered; that stretch reads KLPSAAEPVDHAPRGQEPRSPPPRDPAHRPLLRDPGPRPRVPPPGPSGDGSL. 2 stretches are compositionally biased toward basic and acidic residues: residues 111 to 120 and 128 to 140; these read PVDHAPRGQE and DPAH…DPGP. The ATP site is built by glutamine 264, lysine 280, and glutamate 301. Glutamate 301 lines the Mn(2+) pocket. The interval 349-560 is kinase domain; that stretch reads FVSPANNICF…AVRDCVEKDG (212 aa). Intrachain disulfides connect cysteine 357–cysteine 373 and cysteine 362–cysteine 366. 384–387 provides a ligand contact to ATP; the sequence is AAFL. Disulfide bonds link cysteine 421-cysteine 495 and cysteine 496-cysteine 555. Aspartate 453 is a catalytic residue. Residues glutamate 458 and aspartate 473 each contribute to the ATP site. Mn(2+) is bound at residue aspartate 473.

It belongs to the FAM20 family. Homodimer; disulfide-linked. Interacts with FAM20A; probably forming a heterotetramer of 2 subunits of FAM20A and 2 subunits of FAM20C. Interacts with COPII components SEC23A and SEC24A; transport of FAM20C from the endoplasmic reticulum to the Golgi is likely to be mediated by COPII vesicles. Mn(2+) is required as a cofactor. Post-translationally, N-glycosylation is required for folding. Autophosphorylated. In terms of processing, propeptide cleavage by MBTPS1/S1P promotes FAM20C secretion and maximal kinase activity which is essential for efficient osteoblast differentiation and biomineralization. As to expression, in the mammary gland, expressed at higher levels in lactating mice than in virgin mice (at protein level). Highly expressed in the tooth. No expression in the dental pulp. At the secretory stage of amelogenesis, it is detected in the matrix of the enamel, in the ameloblasts, and within the cells adjoining the stratum intermedium (a tissue layer analogous to the stellate reticulum seen in the developing molar). Strong expression is observed in maturation stage ameloblasts and throughout the non-cornified layers of the gingival epithelium. Expressed at moderate levels in bone and at low levels in kidney, liver, brain and lung. Very low expression, if any, in spleen and skeletal muscle.

The protein localises to the golgi apparatus membrane. It localises to the secreted. It is found in the endoplasmic reticulum. The catalysed reaction is L-seryl-[protein] + ATP = O-phospho-L-seryl-[protein] + ADP + H(+). The enzyme catalyses L-threonyl-[protein] + ATP = O-phospho-L-threonyl-[protein] + ADP + H(+). With respect to regulation, serine/threonine protein kinase activity is increased upon interaction with FAM20A. Golgi serine/threonine protein kinase that phosphorylates secretory pathway proteins within Ser-x-Glu/pSer motifs and plays a key role in biomineralization of bones and teeth. Constitutes the main protein kinase for extracellular proteins, generating the majority of the extracellular phosphoproteome. Mainly phosphorylates proteins within the Ser-x-Glu/pSer motif, but also displays a broader substrate specificity. Phosphorylates ERO1A, enhancing its activity which is required to maintain endoplasmic reticulum redox homeostasis and for oxidative protein folding. During endoplasmic reticulum stress, phosphorylates P4HB/PDIA1 which induces a functional switch, causing P4HB to change from an oxidoreductase to a molecular chaperone. This is critical to maintain ER proteostasis and reduce cell death under ER stress. Phosphorylation of P4HB also promotes its interaction with ERN1, leading to reduced activity of ERN1, a key sensor for the endoplasmic reticulum unfolded protein response. Required for osteoblast differentiation and mineralization. Phosphorylates casein as well as a number of proteins involved in biomineralization such as AMELX, AMTN, ENAM and SPP1. In addition to its role in biomineralization, also plays a role in lipid homeostasis, wound healing and cell migration and adhesion. The protein is Extracellular serine/threonine protein kinase FAM20C of Mus musculus (Mouse).